The following is a 4910-amino-acid chain: Midasin (4910 aa).

2 AAA-ATPase protomer regions span residues 305 to 528 (IQNS…DILF) and 636 to 975 (MEQI…TDII). ATP-binding positions include 315–322 (GKAGSGKT) and 653–660 (GETGTGKT). The tract at residues 695–803 (VNSKTVAVPI…KKFEAQSSSI (109 aa)) is interaction with RIX1. Phosphothreonine is present on Thr1026. AAA-ATPase protomer regions lie at residues 1054-1280 (HYII…WALR), 1345-1624 (KGMR…VEFI), 1732-1985 (RVVR…QLLI), and 2036-2286 (VYES…DELH). Residues 1083–1090 (GPTSSGKT), 1368–1375 (GETGCGKT), 1747–1754 (GSPGVGKT), and 2054–2061 (GPSNSGKT) each bind ATP. The tract at residues 2372–4075 (EVGKWANNVL…DGEGAQNNNK (1704 aa)) is linker. Ser2971 carries the post-translational modification Phosphoserine. Disordered stretches follow at residues 4045 to 4547 (SPQP…EKMD), 4555 to 4574 (SDIDAHDANNDVDSKKSGFI), and 4579 to 4600 (SEEDFENELSNEHFSADQEDDS). Residues 4078 to 4088 (EQDEDLTEDAQ) are compositionally biased toward acidic residues. Over residues 4089–4098 (NENKEQQDKD) the composition is skewed to basic and acidic residues. Over residues 4099 to 4154 (ERDDENEDDAVEMEGDMAGELEDLSNGEENDDEDTDSEEEELDEEIDDLNEDDPNA) the composition is skewed to acidic residues. The segment covering 4155–4174 (IDDKMWDDKASDNSKEKDTD) has biased composition (basic and acidic residues). 3 stretches are compositionally biased toward acidic residues: residues 4202–4244 (GDED…EDLE), 4251–4274 (ETLDLPEDMNLDSEHEESDEDVDM), and 4288–4358 (GNED…EEEL). Residue Ser4353 is modified to Phosphoserine. Residues 4359–4372 (KQDAAMEENKEKGG) are compositionally biased toward basic and acidic residues. Thr4388 is subject to Phosphothreonine. Composition is skewed to basic and acidic residues over residues 4435 to 4447 (DVTKNNEESREEA) and 4481 to 4495 (LEKNNERPDEFEHVE). Positions 4498-4516 (NTETDTQALGSATQDQLQT) are enriched in polar residues. Over residues 4517–4531 (IDEDMAIDDDREEQE) the composition is skewed to acidic residues. Phosphoserine is present on Ser4555. Residues 4557–4570 (IDAHDANNDVDSKK) are compositionally biased toward basic and acidic residues. Residues 4704–4899 (QIMIALDDSK…SELPEMLSLI (196 aa)) enclose the VWFA domain.

Belongs to the midasin family. As to quaternary structure, associates with pre-60S ribosomes in the nucleoplasm. Interacts (via its hexameric AAA ATPase ring) with the RIX1 complex (via RIX1); this interaction is crucial for recruitment of MDN1 to the pre-ribosomal particle. Interacts (via VWFA/MIDAS domain) with YTM1 (via UBL domain). Interacts (via VWFA/MIDAS domain) with RSA4 (via UBL domain).

The protein localises to the nucleus. It is found in the nucleolus. It localises to the nucleoplasm. Its function is as follows. Nuclear chaperone required for maturation and nuclear export of pre-60S ribosome subunits. Functions at successive maturation steps to remove ribosomal factors at critical transition points, first driving the exit of early pre-60S particles from the nucleolus and then driving late pre-60S particles from the nucleus. At an early stage in 60S maturation, mediates the dissociation of the NOP7 complex (YTM1-ERB1-NOP7) from early pre-60S particles, rendering them competent for export from the nucleolus to the nucleoplasm. Subsequently recruited to the nucleoplasmic particles through interaction with the RIX1 complex. This binding is only possible if the 5S RNP at the central protuberance has undergone the rotation to complete its maturation. After remodeling, removes the ribosome biogenesis factor RSA4 in an ATP hydrolysis-driven step from pre-60S ribosomal subunits, rendering them competent for export from the nucleoplasm to the cytoplasm. Activates the GTPase activity of NOG2, which disengages from the pre-60S particle upon GTP hydrolysis, thus freeing its binding site for the nuclear export factor NMD3. This chain is Midasin (MDN1), found in Saccharomyces cerevisiae (strain ATCC 204508 / S288c) (Baker's yeast).